A 146-amino-acid chain; its full sequence is Anti-sigma F factor (146 aa).

The protein belongs to the anti-sigma-factor family.

The catalysed reaction is L-seryl-[protein] + ATP = O-phospho-L-seryl-[protein] + ADP + H(+). The enzyme catalyses L-threonyl-[protein] + ATP = O-phospho-L-threonyl-[protein] + ADP + H(+). Binds to sigma F and blocks its ability to form an RNA polymerase holoenzyme (E-sigma F). Phosphorylates SpoIIAA on a serine residue. This phosphorylation may enable SpoIIAA to act as an anti-anti-sigma factor that counteracts SpoIIAB and thus releases sigma F from inhibition. This is Anti-sigma F factor from Bacillus velezensis (strain DSM 23117 / BGSC 10A6 / LMG 26770 / FZB42) (Bacillus amyloliquefaciens subsp. plantarum).